The primary structure comprises 440 residues: Ferredoxin--NADP reductase (440 aa).

The 59-residue stretch at 17-75 (SRVFVYEVVGMRQNEETDQTNYPIRKSGSVFIRVPYNRMNQEMQRITRLGGKIVSIQTV) folds into the CpcD-like domain. A disordered region spans residues 93–142 (ASSETAKSEGNGKATPVKTDSGAKGFAKPPAEEQLKKKDNKGNTMTQAKA). Residues 122-133 (PAEEQLKKKDNK) show a composition bias toward basic and acidic residues. Positions 155-279 (NAPFIGKVIS…TGPVGKEMLL (125 aa)) constitute an FAD-binding FR-type domain. FAD is bound by residues 214 to 217 (RLYS), 235 to 237 (CVR), tyrosine 241, 253 to 255 (VCS), and threonine 294. NADP(+)-binding residues include serine 217 and arginine 237. NADP(+) is bound by residues threonine 294, 330 to 331 (VP), 360 to 361 (SR), 370 to 374 (RMYIQ), 399 to 400 (GL), and glutamate 438.

Belongs to the ferredoxin--NADP reductase type 1 family. The cofactor is FAD.

The protein localises to the cellular thylakoid membrane. The enzyme catalyses 2 reduced [2Fe-2S]-[ferredoxin] + NADP(+) + H(+) = 2 oxidized [2Fe-2S]-[ferredoxin] + NADPH. The polypeptide is Ferredoxin--NADP reductase (petH) (Trichormus variabilis (strain ATCC 29413 / PCC 7937) (Anabaena variabilis)).